We begin with the raw amino-acid sequence, 321 residues long: MKSIYKYTFMLFVFLFGTLMMAEDITGEIVVFHAGSLSVPFAQIEKAFESQYPGTDVIREAAGSREAVRKVTDLGREADVIGSADYTVIENLMIPEYTEWYINFANNEMVIMYTEDSRYKDEINSDNWYEILLRPDVEYGHSDPNADPCGYRSQIVWKLAEKYYKVDSLYKKLADNCPPKNVRPKETDLIALLEAGELDYIFIYKSVALQHRMPYVELPEQINLKSTKYADFYATASFDVTGKEPGEMITQIGQPMVYALTIPNNAPNLQGAIAFIKFVIGPQGRAIMEENGQPSINPPEGVNIEKAPQELQDFLKGGAND.

The signal sequence occupies residues 1–22 (MKSIYKYTFMLFVFLFGTLMMA).

Belongs to the bacterial solute-binding protein 1 family. WtpA subfamily.

This is an uncharacterized protein from Petrotoga mobilis (strain DSM 10674 / SJ95).